A 251-amino-acid polypeptide reads, in one-letter code: Cell division protein ZapD (251 aa).

Belongs to the ZapD family. Interacts with FtsZ.

It is found in the cytoplasm. Cell division factor that enhances FtsZ-ring assembly. Directly interacts with FtsZ and promotes bundling of FtsZ protofilaments, with a reduction in FtsZ GTPase activity. The sequence is that of Cell division protein ZapD from Burkholderia mallei (strain NCTC 10247).